We begin with the raw amino-acid sequence, 395 residues long: NAD(P)H-quinone oxidoreductase subunit H (395 aa).

The protein belongs to the complex I 49 kDa subunit family. In terms of assembly, NDH-1 can be composed of about 15 different subunits; different subcomplexes with different compositions have been identified which probably have different functions.

The protein localises to the cellular thylakoid membrane. The catalysed reaction is a plastoquinone + NADH + (n+1) H(+)(in) = a plastoquinol + NAD(+) + n H(+)(out). It carries out the reaction a plastoquinone + NADPH + (n+1) H(+)(in) = a plastoquinol + NADP(+) + n H(+)(out). In terms of biological role, NDH-1 shuttles electrons from an unknown electron donor, via FMN and iron-sulfur (Fe-S) centers, to quinones in the respiratory and/or the photosynthetic chain. The immediate electron acceptor for the enzyme in this species is believed to be plastoquinone. Couples the redox reaction to proton translocation, and thus conserves the redox energy in a proton gradient. Cyanobacterial NDH-1 also plays a role in inorganic carbon-concentration. The sequence is that of NAD(P)H-quinone oxidoreductase subunit H from Prochlorococcus marinus (strain MIT 9312).